The following is a 121-amino-acid chain: Large ribosomal subunit protein uL18 (121 aa).

This sequence belongs to the universal ribosomal protein uL18 family. In terms of assembly, part of the 50S ribosomal subunit; part of the 5S rRNA/L5/L18/L25 subcomplex. Contacts the 5S and 23S rRNAs.

This is one of the proteins that bind and probably mediate the attachment of the 5S RNA into the large ribosomal subunit, where it forms part of the central protuberance. In Verminephrobacter eiseniae (strain EF01-2), this protein is Large ribosomal subunit protein uL18.